Here is a 354-residue protein sequence, read N- to C-terminus: Heat-inducible transcription repressor HrcA (354 aa).

Belongs to the HrcA family.

Its function is as follows. Negative regulator of class I heat shock genes (grpE-dnaK-dnaJ and groELS operons). Prevents heat-shock induction of these operons. This Novosphingobium aromaticivorans (strain ATCC 700278 / DSM 12444 / CCUG 56034 / CIP 105152 / NBRC 16084 / F199) protein is Heat-inducible transcription repressor HrcA.